The primary structure comprises 333 residues: Tetraacyldisaccharide 4'-kinase (333 aa).

Residue 60–67 (TVGGTGKT) participates in ATP binding.

This sequence belongs to the LpxK family.

It carries out the reaction a lipid A disaccharide + ATP = a lipid IVA + ADP + H(+). It participates in glycolipid biosynthesis; lipid IV(A) biosynthesis; lipid IV(A) from (3R)-3-hydroxytetradecanoyl-[acyl-carrier-protein] and UDP-N-acetyl-alpha-D-glucosamine: step 6/6. In terms of biological role, transfers the gamma-phosphate of ATP to the 4'-position of a tetraacyldisaccharide 1-phosphate intermediate (termed DS-1-P) to form tetraacyldisaccharide 1,4'-bis-phosphate (lipid IVA). This chain is Tetraacyldisaccharide 4'-kinase, found in Pseudomonas putida (strain GB-1).